The chain runs to 84 residues: Toxin Tb1 (84 aa).

A signal peptide spans 1 to 20; it reads MKGMILFISCLLLIGIVVEC. Residues 21–82 form the LCN-type CS-alpha/beta domain; the sequence is KEGYLMDHEG…VWDRATNKCG (62 aa). 4 disulfide bridges follow: Cys-31-Cys-81, Cys-35-Cys-57, Cys-43-Cys-62, and Cys-47-Cys-64. Cys-81 carries the cysteine amide modification.

It belongs to the long (4 C-C) scorpion toxin superfamily. Sodium channel inhibitor family. Beta subfamily. As to expression, expressed by the venom gland.

Its subcellular location is the secreted. Functionally, beta toxins bind voltage-independently at site-4 of sodium channels (Nav) and shift the voltage of activation toward more negative potentials thereby affecting sodium channel activation and promoting spontaneous and repetitive firing. Is lethal to mice. This chain is Toxin Tb1, found in Tityus bahiensis (Brazilian scorpion).